Reading from the N-terminus, the 518-residue chain is Cytochrome P450 709B3 (518 aa).

A helical transmembrane segment spans residues 3–23 (LISTINLLTIVLLLFVVSKIW). Residue Cys465 coordinates heme.

It belongs to the cytochrome P450 family. Requires heme as cofactor. Highly expressed in rosette leaves and siliques, and at lower levels in flowers.

The protein resides in the membrane. Functionally, plays a role in abscisic acid (ABA) and salt stress response. May regulate the salt stress response independently of well-characterized pathways. Does not function as cytokinin hydroxylase in yeast heterologous system. This Arabidopsis thaliana (Mouse-ear cress) protein is Cytochrome P450 709B3.